Here is a 199-residue protein sequence, read N- to C-terminus: Probable GTP-binding protein EngB (199 aa).

The EngB-type G domain maps to 28 to 199 (DLPEIALAGR…ESWDTILEYL (172 aa)). GTP is bound by residues 36–43 (GRSNVGKS), 63–67 (GKTQL), 81–84 (DVPG), 148–151 (TKAD), and 180–182 (FSS). Positions 43 and 65 each coordinate Mg(2+).

This sequence belongs to the TRAFAC class TrmE-Era-EngA-EngB-Septin-like GTPase superfamily. EngB GTPase family. Mg(2+) serves as cofactor.

Necessary for normal cell division and for the maintenance of normal septation. In Streptococcus equi subsp. zooepidemicus (strain H70), this protein is Probable GTP-binding protein EngB.